The primary structure comprises 129 residues: Small ribosomal subunit protein uS11 (129 aa).

The protein belongs to the universal ribosomal protein uS11 family. In terms of assembly, part of the 30S ribosomal subunit. Interacts with proteins S7 and S18. Binds to IF-3.

In terms of biological role, located on the platform of the 30S subunit, it bridges several disparate RNA helices of the 16S rRNA. Forms part of the Shine-Dalgarno cleft in the 70S ribosome. The protein is Small ribosomal subunit protein uS11 of Serratia proteamaculans (strain 568).